Consider the following 159-residue polypeptide: Large ribosomal subunit protein uL11 (159 aa).

The segment at 1 to 26 (MAGTIEVLVPGGKANPGPPLGPELGP) is disordered.

This sequence belongs to the universal ribosomal protein uL11 family. Part of the ribosomal stalk of the 50S ribosomal subunit. Interacts with L10 and the large rRNA to form the base of the stalk. L10 forms an elongated spine to which L12 dimers bind in a sequential fashion forming a multimeric L10(L12)X complex.

In terms of biological role, forms part of the ribosomal stalk which helps the ribosome interact with GTP-bound translation factors. This is Large ribosomal subunit protein uL11 from Haloferax volcanii (strain ATCC 29605 / DSM 3757 / JCM 8879 / NBRC 14742 / NCIMB 2012 / VKM B-1768 / DS2) (Halobacterium volcanii).